Here is a 103-residue protein sequence, read N- to C-terminus: Urease subunit beta (103 aa).

This sequence belongs to the urease beta subunit family. In terms of assembly, heterotrimer of UreA (gamma), UreB (beta) and UreC (alpha) subunits. Three heterotrimers associate to form the active enzyme.

Its subcellular location is the cytoplasm. It catalyses the reaction urea + 2 H2O + H(+) = hydrogencarbonate + 2 NH4(+). Its pathway is nitrogen metabolism; urea degradation; CO(2) and NH(3) from urea (urease route): step 1/1. The chain is Urease subunit beta from Streptomyces coelicolor (strain ATCC BAA-471 / A3(2) / M145).